We begin with the raw amino-acid sequence, 304 residues long: Quinolinate synthase (304 aa).

Iminosuccinate contacts are provided by histidine 23 and serine 40. Position 85 (cysteine 85) interacts with [4Fe-4S] cluster. Iminosuccinate-binding positions include 111-113 (YIN) and serine 128. Cysteine 171 is a [4Fe-4S] cluster binding site. Iminosuccinate is bound by residues 197-199 (HPE) and threonine 214. Cysteine 259 is a [4Fe-4S] cluster binding site.

The protein belongs to the quinolinate synthase family. Type 2 subfamily. The cofactor is [4Fe-4S] cluster.

The protein resides in the cytoplasm. It catalyses the reaction iminosuccinate + dihydroxyacetone phosphate = quinolinate + phosphate + 2 H2O + H(+). Its pathway is cofactor biosynthesis; NAD(+) biosynthesis; quinolinate from iminoaspartate: step 1/1. Functionally, catalyzes the condensation of iminoaspartate with dihydroxyacetone phosphate to form quinolinate. In Clostridioides difficile (strain 630) (Peptoclostridium difficile), this protein is Quinolinate synthase.